A 178-amino-acid polypeptide reads, in one-letter code: Interleukin-10 (178 aa).

The first 18 residues, 1-18 (MPGSALLCCLLLLTGMRI), serve as a signal peptide directing secretion. An N-linked (GlcNAc...) asparagine glycan is attached at N29. 2 cysteine pairs are disulfide-bonded: C30–C126 and C80–C132. Residue N134 is glycosylated (N-linked (GlcNAc...) asparagine).

Belongs to the IL-10 family. In terms of assembly, homodimer. Interacts with IL10RA and IL10RB.

It is found in the secreted. Its function is as follows. Major immune regulatory cytokine that acts on many cells of the immune system where it has profound anti-inflammatory functions, limiting excessive tissue disruption caused by inflammation. Mechanistically, IL10 binds to its heterotetrameric receptor comprising IL10RA and IL10RB leading to JAK1 and STAT2-mediated phosphorylation of STAT3. In turn, STAT3 translocates to the nucleus where it drives expression of anti-inflammatory mediators. Targets antigen-presenting cells (APCs) such as macrophages and monocytes and inhibits their release of pro-inflammatory cytokines including granulocyte-macrophage colony-stimulating factor /GM-CSF, granulocyte colony-stimulating factor/G-CSF, IL-1 alpha, IL-1 beta, IL-6, IL-8 and TNF-alpha. Also interferes with antigen presentation by reducing the expression of MHC-class II and co-stimulatory molecules, thereby inhibiting their ability to induce T cell activation. In addition, controls the inflammatory response of macrophages by reprogramming essential metabolic pathways including mTOR signaling. This Mus musculus (Mouse) protein is Interleukin-10 (Il10).